We begin with the raw amino-acid sequence, 264 residues long: S-adenosylmethionine decarboxylase proenzyme (264 aa).

Residue Ser112 is the Schiff-base intermediate with substrate; via pyruvic acid of the active site. Pyruvic acid (Ser); by autocatalysis is present on Ser112. The active-site Proton acceptor; for processing activity is the His117. Cys140 serves as the catalytic Proton donor; for catalytic activity.

The protein belongs to the prokaryotic AdoMetDC family. Type 2 subfamily. In terms of assembly, heterooctamer of four alpha and four beta chains arranged as a tetramer of alpha/beta heterodimers. Pyruvate is required as a cofactor. In terms of processing, is synthesized initially as an inactive proenzyme. Formation of the active enzyme involves a self-maturation process in which the active site pyruvoyl group is generated from an internal serine residue via an autocatalytic post-translational modification. Two non-identical subunits are generated from the proenzyme in this reaction, and the pyruvate is formed at the N-terminus of the alpha chain, which is derived from the carboxyl end of the proenzyme. The post-translation cleavage follows an unusual pathway, termed non-hydrolytic serinolysis, in which the side chain hydroxyl group of the serine supplies its oxygen atom to form the C-terminus of the beta chain, while the remainder of the serine residue undergoes an oxidative deamination to produce ammonia and the pyruvoyl group blocking the N-terminus of the alpha chain.

The enzyme catalyses S-adenosyl-L-methionine + H(+) = S-adenosyl 3-(methylsulfanyl)propylamine + CO2. Its pathway is amine and polyamine biosynthesis; S-adenosylmethioninamine biosynthesis; S-adenosylmethioninamine from S-adenosyl-L-methionine: step 1/1. Its function is as follows. Catalyzes the decarboxylation of S-adenosylmethionine to S-adenosylmethioninamine (dcAdoMet), the propylamine donor required for the synthesis of the polyamines spermine and spermidine from the diamine putrescine. In Pectobacterium atrosepticum (strain SCRI 1043 / ATCC BAA-672) (Erwinia carotovora subsp. atroseptica), this protein is S-adenosylmethionine decarboxylase proenzyme.